A 426-amino-acid polypeptide reads, in one-letter code: MVNYFIISISFFLLEHFYSFYLNFRQSKLLKNLTKVPEYCKDRITQEDFKKSQEYSKAKLDYKTLTSTIQVLTTLLSFYYPVYPYFWNLSLELAEKIGYPNEIIRSCFFFAFTVGVSVITEIPFSYYYQFILEEKFGYNRMTRTLFIKDKIISTLLMIGFGLPILSLAIFIINWSGPQLWFYCWLLLVAITLLSITIYPTFIQPLFNKFTPVDGELAESIFALAKRVGFPASKDTIFVVDNSKRDGHMNAYFYGLFGTKRIVLYDTLVNELDKEELLAVMGHEFGHYKMSHTLKQMLLVQVHLVTLLYAFSLLINDDQLYQQFGFVSSKDSVLVGLTLFMFLYSPIDRIFSLLINIFSRKYEFQADDFAVELGFLNSNHLFKLHFKELGCLVYDPLYSAYHHSHPTLVERSNNIDKKVALYKLKNK.

The Lumenal segment spans residues 1–3 (MVN). Residues 4 to 24 (YFIISISFFLLEHFYSFYLNF) form a helical membrane-spanning segment. Residues 25-70 (RQSKLLKNLTKVPEYCKDRITQEDFKKSQEYSKAKLDYKTLTSTIQ) are Cytoplasmic-facing. A helical membrane pass occupies residues 71–91 (VLTTLLSFYYPVYPYFWNLSL). The Lumenal portion of the chain corresponds to 92-106 (ELAEKIGYPNEIIRS). Residues 107 to 127 (CFFFAFTVGVSVITEIPFSYY) traverse the membrane as a helical segment. Topologically, residues 128–150 (YQFILEEKFGYNRMTRTLFIKDK) are cytoplasmic. A helical transmembrane segment spans residues 151-171 (IISTLLMIGFGLPILSLAIFI). Topologically, residues 172–178 (INWSGPQ) are lumenal. Residues 179 to 199 (LWFYCWLLLVAITLLSITIYP) form a helical membrane-spanning segment. The Cytoplasmic portion of the chain corresponds to 200–294 (TFIQPLFNKF…GHYKMSHTLK (95 aa)). Position 282 (histidine 282) interacts with Zn(2+). Glutamate 283 is a catalytic residue. Histidine 286 is a binding site for Zn(2+). Residues 295 to 315 (QMLLVQVHLVTLLYAFSLLIN) form a helical membrane-spanning segment. Residues 316 to 333 (DDQLYQQFGFVSSKDSVL) are Lumenal-facing. The helical transmembrane segment at 334–354 (VGLTLFMFLYSPIDRIFSLLI) threads the bilayer. The Cytoplasmic segment spans residues 355 to 426 (NIFSRKYEFQ…KVALYKLKNK (72 aa)). Residue glutamate 362 participates in Zn(2+) binding.

This sequence belongs to the peptidase M48B family. The cofactor is Zn(2+).

Its subcellular location is the endoplasmic reticulum membrane. The enzyme catalyses Hydrolyzes the peptide bond -P2-(S-farnesyl or geranylgeranyl)C-P1'-P2'-P3'-COOH where P1' and P2' are amino acids with aliphatic side chains and P3' is any C-terminal residue.. Its function is as follows. Proteolytically removes the C-terminal three residues of farnesylated proteins. The chain is CAAX prenyl protease 1 homolog (zmpste24) from Dictyostelium discoideum (Social amoeba).